The sequence spans 312 residues: Erlin (312 aa).

Topologically, residues 1-3 (MLT) are cytoplasmic. The chain crosses the membrane as a helical span at residues 4–24 (ELALGLFALWIAIFSQALHKI). Residues 25–312 (EEGHVGVYYR…FVMGTTQQTV (288 aa)) lie on the Lumenal side of the membrane. Asn-104 carries N-linked (GlcNAc...) asparagine glycosylation.

This sequence belongs to the band 7/mec-2 family. Seems to form a multimeric complex. In terms of tissue distribution, expressed in the germline only.

Its subcellular location is the endoplasmic reticulum membrane. The sequence is that of Erlin from Caenorhabditis elegans.